The chain runs to 466 residues: tRNA modification GTPase MnmE (466 aa).

Residues R22, E87, and R126 each coordinate (6S)-5-formyl-5,6,7,8-tetrahydrofolate. Residues 222-382 enclose the TrmE-type G domain; the sequence is GWRTVIVGRP…LTELIRRMVY (161 aa). Residue N232 coordinates K(+). Residues 232–237, 251–257, and 276–279 each bind GTP; these read NVGKSS, TEIPGTT, and DTAG. Mg(2+) is bound at residue S236. K(+) is bound by residues T251, I253, and T256. T257 is a binding site for Mg(2+). K466 serves as a coordination point for (6S)-5-formyl-5,6,7,8-tetrahydrofolate.

It belongs to the TRAFAC class TrmE-Era-EngA-EngB-Septin-like GTPase superfamily. TrmE GTPase family. In terms of assembly, homodimer. Heterotetramer of two MnmE and two MnmG subunits. K(+) is required as a cofactor.

The protein localises to the cytoplasm. In terms of biological role, exhibits a very high intrinsic GTPase hydrolysis rate. Involved in the addition of a carboxymethylaminomethyl (cmnm) group at the wobble position (U34) of certain tRNAs, forming tRNA-cmnm(5)s(2)U34. The chain is tRNA modification GTPase MnmE from Heliobacterium modesticaldum (strain ATCC 51547 / Ice1).